We begin with the raw amino-acid sequence, 446 residues long: MTLANVFIQDTIVAIATYLAPSSVAIIRLSGNEAIRLAKSICVKKNHWHSHRIIHTYVQDDQNQLIDEVLVLPMLAPRSYTRQDVVEIHAHGGVVVAQTILQLLINRGARLAKPGEFTLRAFINGRLTLTQAESVLELIHAPSVAMAKKALSNLRGALSTQLHQVRSELIQLLAQIEAHLDFDLDNTFVFNSFINSLTNIINQIQNLLNTPSKFYRYGIQVALLGPANAGKSTLFNALIGEERSIVTPIAGTTTDVVEATLQWQQICFRFFDTAGLKEASSEIETKAMAKAQQIAKQCDLILWIIDATSPNLPIPPYLLNSKPLLVVYNKIDVDSSDVLDHVLDHTSYPTVKVSALYATNLSQLKQLIWQQATQLFQLDGIYINERQSQLLQQAKQHLCNLQSALDEGYPLEIISWHLKNAIQCLDENDVNASTLNAIFSQFCIGK.

The (6S)-5-formyl-5,6,7,8-tetrahydrofolate site is built by Arg28, Glu87, and Arg126. Residues Gly218 to Thr373 enclose the TrmE-type G domain. Asn228 is a K(+) binding site. Residues Asn228–Thr233, Thr247–Thr253, and Asp272–Gly275 each bind GTP. Ser232 serves as a coordination point for Mg(2+). K(+)-binding residues include Thr247, Ile249, and Thr252. Thr253 is a Mg(2+) binding site. Lys446 lines the (6S)-5-formyl-5,6,7,8-tetrahydrofolate pocket.

It belongs to the TRAFAC class TrmE-Era-EngA-EngB-Septin-like GTPase superfamily. TrmE GTPase family. K(+) serves as cofactor.

The protein localises to the plastid. The protein resides in the chloroplast. Functionally, exhibits a very high intrinsic GTPase hydrolysis rate. Involved in the addition of a carboxymethylaminomethyl (cmnm) group at the wobble position (U34) of certain tRNAs, forming tRNA-cmnm(5)s(2)U34. The sequence is that of Probable tRNA modification GTPase MnmE from Cyanidioschyzon merolae (strain NIES-3377 / 10D) (Unicellular red alga).